The following is a 569-amino-acid chain: Proton-coupled zinc antiporter SLC30A9, mitochondrial (569 aa).

The transit peptide at 1 to 68 (MLPGLAAAAA…IGTLSQVKLY (68 aa)) directs the protein to the mitochondrion. 5 helical membrane-spanning segments follow: residues 240-260 (VVMV…LAWI), 315-335 (GVGI…MGLL), 343-363 (LLWA…TLLV), 393-413 (VILL…TCMG), and 425-445 (SLGS…LIYT). The LXXLL motif signature appears at 463-467 (LTELL).

The protein belongs to the cation diffusion facilitator (CDF) transporter (TC 2.A.4) family. SLC30A subfamily. Interacts with GRIP1, ESR1, AR and CTNNB1.

Its subcellular location is the mitochondrion membrane. It localises to the nucleus. It is found in the endoplasmic reticulum. The catalysed reaction is Zn(2+)(in) + 2 H(+)(out) = Zn(2+)(out) + 2 H(+)(in). Mitochondrial proton-coupled zinc ion antiporter mediating the export of zinc from the mitochondria and involved in zinc homeostasis, zinc mobilization as well as mitochondrial morphology and health. In nucleus, functions as a secondary coactivator for nuclear receptors by cooperating with p160 coactivators subtypes. Plays a role in transcriptional activation of Wnt-responsive genes. The sequence is that of Proton-coupled zinc antiporter SLC30A9, mitochondrial (SLC30A9) from Pongo abelii (Sumatran orangutan).